A 340-amino-acid polypeptide reads, in one-letter code: N-acetyl-gamma-glutamyl-phosphate reductase (340 aa).

The active site involves Cys-147.

Belongs to the NAGSA dehydrogenase family. Type 1 subfamily.

It localises to the cytoplasm. The enzyme catalyses N-acetyl-L-glutamate 5-semialdehyde + phosphate + NADP(+) = N-acetyl-L-glutamyl 5-phosphate + NADPH + H(+). Its pathway is amino-acid biosynthesis; L-arginine biosynthesis; N(2)-acetyl-L-ornithine from L-glutamate: step 3/4. Catalyzes the NADPH-dependent reduction of N-acetyl-5-glutamyl phosphate to yield N-acetyl-L-glutamate 5-semialdehyde. The polypeptide is N-acetyl-gamma-glutamyl-phosphate reductase (Lactococcus lactis subsp. lactis (strain IL1403) (Streptococcus lactis)).